The sequence spans 621 residues: Cryptochrome-1 (621 aa).

In terms of domain architecture, Photolyase/cryptochrome alpha/beta spans 3-132; that stretch reads VNAVHWFRKG…EVIVRISHTL (130 aa). Short sequence motifs (LIR) lie at residues 50–54, 82–87, and 151–156; these read NRWRF, DVFPRL, and KRFQTL. S252 provides a ligand contact to FAD. Short sequence motifs (LIR) lie at residues 255–260, 271–276, 285–290, and 335–339; these read LRFGCL, DLYKKV, SLYGQL, and TGFPW. Q289 is an FAD binding site. H355 contacts FAD. The short motif at 379-384 is the LIR 8 element; it reads KVFEEL. 387–389 provides a ligand contact to FAD; sequence DAD. 5 short sequence motifs (LIR) span residues 395–400, 411–416, 430–435, 486–491, and 492–497; these read GSWMWL, HCYCPV, RRYLPV, QIYQQL, and SRYRGL. The segment at 581–621 is disordered; it reads QSHLMQPGRASLGTGISAGKRPNPEEETQSVGPKVQRQSTN.

It belongs to the DNA photolyase class-1 family. In terms of assembly, component of the circadian core oscillator, which includes the CRY proteins, CLOCK or NPAS2, BMAL1 or BMAL2, CSNK1E, and the PER proteins. The cofactor is FAD. (6R)-5,10-methylene-5,6,7,8-tetrahydrofolate is required as a cofactor. Expressed in the pineal gland.

The protein localises to the cytoplasm. The protein resides in the nucleus. Functionally, transcriptional repressor which forms a core component of the circadian clock. The circadian clock, an internal time-keeping system, regulates various physiological processes through the generation of approximately 24 hour circadian rhythms in gene expression, which are translated into rhythms in metabolism and behavior. It is derived from the Latin roots 'circa' (about) and 'diem' (day) and acts as an important regulator of a wide array of physiological functions including metabolism, sleep, body temperature, blood pressure, endocrine, immune, cardiovascular, and renal function. Consists of two major components: the central clock, residing in the suprachiasmatic nucleus (SCN) of the brain, and the peripheral clocks that are present in nearly every tissue and organ system. Both the central and peripheral clocks can be reset by environmental cues, also known as Zeitgebers (German for 'timegivers'). The predominant Zeitgeber for the central clock is light, which is sensed by retina and signals directly to the SCN. The central clock entrains the peripheral clocks through neuronal and hormonal signals, body temperature and feeding-related cues, aligning all clocks with the external light/dark cycle. Circadian rhythms allow an organism to achieve temporal homeostasis with its environment at the molecular level by regulating gene expression to create a peak of protein expression once every 24 hours to control when a particular physiological process is most active with respect to the solar day. Transcription and translation of core clock components (CLOCK, NPAS2, BMAL1, BMAL2, PER1, PER2, PER3, CRY1 and CRY2) plays a critical role in rhythm generation, whereas delays imposed by post-translational modifications (PTMs) are important for determining the period (tau) of the rhythms (tau refers to the period of a rhythm and is the length, in time, of one complete cycle). A diurnal rhythm is synchronized with the day/night cycle, while the ultradian and infradian rhythms have a period shorter and longer than 24 hours, respectively. Disruptions in the circadian rhythms contribute to the pathology of cardiovascular diseases, cancer, metabolic syndromes and aging. A transcription/translation feedback loop (TTFL) forms the core of the molecular circadian clock mechanism. Transcription factors, CLOCK or NPAS2 and BMAL1 or BMAL2, form the positive limb of the feedback loop, act in the form of a heterodimer and activate the transcription of core clock genes and clock-controlled genes (involved in key metabolic processes), harboring E-box elements (5'-CACGTG-3') within their promoters. The core clock genes: PER1/2/3 and CRY1/2 which are transcriptional repressors form the negative limb of the feedback loop and interact with the CLOCK|NPAS2-BMAL1|BMAL2 heterodimer inhibiting its activity and thereby negatively regulating their own expression. This heterodimer also activates nuclear receptors NR1D1/2 and RORA/B/G, which form a second feedback loop and which activate and repress BMAL1 transcription, respectively. CRY1 and CRY2 have redundant functions but also differential and selective contributions at least in defining the pace of the SCN circadian clock and its circadian transcriptional outputs. More potent transcriptional repressor in cerebellum and liver than CRY2, though more effective in lengthening the period of the SCN oscillator. On its side, CRY2 seems to play a critical role in tuning SCN circadian period by opposing the action of CRY1. With CRY2, is dispensable for circadian rhythm generation but necessary for the development of intercellular networks for rhythm synchrony. Capable of translocating circadian clock core proteins such as PER proteins to the nucleus. Interacts with CLOCK-BMAL1 independently of PER proteins and is found at CLOCK-BMAL1-bound sites, suggesting that CRY may act as a molecular gatekeeper to maintain CLOCK-BMAL1 in a poised and repressed state until the proper time for transcriptional activation. Represses CLOCK-BMAL1-mediated transcriptional activation. The polypeptide is Cryptochrome-1 (CRY1) (Gallus gallus (Chicken)).